Here is a 383-residue protein sequence, read N- to C-terminus: GDSL esterase/lipase At1g28610 (383 aa).

Positions 1–22 are cleaved as a signal peptide; that stretch reads MASLDSLVSFFLSTLFVTIVSS. The active-site Nucleophile is the serine 38. 3 N-linked (GlcNAc...) asparagine glycosylation sites follow: asparagine 134, asparagine 184, and asparagine 315. Catalysis depends on residues aspartate 340 and histidine 343.

The protein belongs to the 'GDSL' lipolytic enzyme family.

The protein localises to the secreted. The polypeptide is GDSL esterase/lipase At1g28610 (Arabidopsis thaliana (Mouse-ear cress)).